Here is a 628-residue protein sequence, read N- to C-terminus: Somatic embryogenesis receptor kinase 2 (628 aa).

An N-terminal signal peptide occupies residues 1–29 (MGRKKFEAFGFVCLISLLLLFNSLWLASS). Topologically, residues 30 to 241 (NMEGDALHSL…PTPGGYSATG (212 aa)) are extracellular. Residues 45-85 (DPNNVLQSWDPTLVNPCTWFHVTCNNENSVIRVDLGNADLS) are PSKR1 binding. The interval 56-58 (TLV) is CLE44 binding. Cys61 and Cys68 are joined by a disulfide. Leucine-rich repeat receptor-like protein kinase binding stretches follow at residues 62–81 (TWFH…DLGN) and 100–105 (YLELYS). Residue 64-65 (FH) participates in brassinolide binding. LRR repeat units lie at residues 95–119 (LKNL…LGNL), 121–143 (NLVS…LGKL), 144–167 (FKLR…LTNI), and 168–192 (MTLQ…SFSL). N-linked (GlcNAc...) asparagine glycosylation is found at Asn107 and Asn118. Leucine-rich repeat receptor-like protein kinase binding stretches follow at residues 126–129 (DLYL) and 148–150 (FLR). Residues Asn153 and Asn187 are each glycosylated (N-linked (GlcNAc...) asparagine). The tract at residues 174–197 (DLSNNRLSGSVPDNGSFSLFTPIS) is leucine-rich repeat receptor-like protein kinase binding. A disulfide bridge links Cys205 with Cys213. The helical transmembrane segment at 242-262 (AIAGGVAAGAALLFAAPALAF) threads the bilayer. Residues 263-628 (AWWRRRKPQE…LHAMELSGPR (366 aa)) are Cytoplasmic-facing. The residue at position 302 (Thr302) is a Phosphothreonine. The 288-residue stretch at 305–592 (FSNKNILGRG…GLAEKWDEWQ (288 aa)) folds into the Protein kinase domain. ATP is bound at residue 311–319 (LGRGGFGKV). Residue Thr328 is modified to Phosphothreonine. ATP is bound at residue Lys333. Ser386 and Ser389 each carry phosphoserine. Asp432 serves as the catalytic Proton acceptor. Phosphothreonine is present on residues Thr462, Thr465, Thr466, and Thr471. Tyr479 is subject to Phosphotyrosine. Ser481 bears the Phosphoserine mark. Residue Thr482 is modified to Phosphothreonine. A Phosphoserine modification is found at Ser486. Position 562 is a phosphothreonine (Thr562). At Ser604 the chain carries Phosphoserine. Thr616 carries the post-translational modification Phosphothreonine. Ser625 carries the post-translational modification Phosphoserine.

This sequence belongs to the protein kinase superfamily. Ser/Thr protein kinase family. In terms of assembly, homo- and heterodimer. Component of the SERK1 signaling complex, composed of KAPP, CDC48A, GRF6 or GRF7, SERK1, SERK2, SERK3/BAK1 and BRI1. Bind to BRI1 in a brassinolide-dependent manner. Heterodimer with PSKR1. Interacts with the EF-Tu receptor EFR and FLS2 in a specific ligand-induced manner. Interacts with ERECTA in a EPF2-induced manner. Interacts with ERL1 in a EPF1-induced manner. Interacts with TMM. In the presence of the signal peptide RGF1, interacts with RGI3/RGFR1 and RGI4/RGFR2/SKM2. Binds to the peptide CLE44 in the presence of TDR. Post-translationally, autophosphorylated. As to expression, expressed in flowers, tapetum, developing microspores, all cells of the embryo sac, provascular strands and developing vascular bundles. Low expression in adult vascular tissue.

It localises to the cell membrane. It catalyses the reaction L-seryl-[protein] + ATP = O-phospho-L-seryl-[protein] + ADP + H(+). The enzyme catalyses L-threonyl-[protein] + ATP = O-phospho-L-threonyl-[protein] + ADP + H(+). Functionally, serine/threonine-kinase involved in brassinosteroid-dependent and -independent signaling pathways. Acts redundantly with SERK1 as a control point for sporophytic development controlling male gametophyte production. Serves as coreceptor to small peptide (e.g. RGF1 and CLE44) signaling. Involved in the perception of phytosulfokine and subsequent signal transduction. The sequence is that of Somatic embryogenesis receptor kinase 2 from Arabidopsis thaliana (Mouse-ear cress).